A 610-amino-acid chain; its full sequence is Glucoamylase ARB_02327-1 (610 aa).

The first 18 residues, 1 to 18, serve as a signal peptide directing secretion; that stretch reads MRVTSLLWSSLVIPAAVG. The propeptide occupies 19–24; that stretch reads FQVRFK. Asn-49 is a glycosylation site (N-linked (GlcNAc...) asparagine). Trp-143 provides a ligand contact to substrate. A glycan (N-linked (GlcNAc...) asparagine) is linked at Asn-194. Asp-199 acts as the Proton acceptor in catalysis. Glu-202 functions as the Proton donor in the catalytic mechanism. 3 disulfide bridges follow: Cys-233–Cys-236, Cys-245–Cys-472, and Cys-285–Cys-293. One can recognise a CBM20 domain in the interval 504–610; the sequence is TALPTKNNVR…SGAIKRDTWR (107 aa).

This sequence belongs to the glycosyl hydrolase 15 family.

The protein localises to the secreted. The catalysed reaction is Hydrolysis of terminal (1-&gt;4)-linked alpha-D-glucose residues successively from non-reducing ends of the chains with release of beta-D-glucose.. The sequence is that of Glucoamylase ARB_02327-1 from Arthroderma benhamiae (strain ATCC MYA-4681 / CBS 112371) (Trichophyton mentagrophytes).